Here is a 455-residue protein sequence, read N- to C-terminus: Rhodopsin (455 aa).

Topologically, residues 1 to 34 (MVESTTLVNQTWWYNPTVDIHPHWAKFDPIPDAV) are extracellular. N-linked (GlcNAc...) asparagine glycosylation occurs at Asn-9. Residues 35–59 (YYSVGIFIGVVGIIGILGNGVVIYL) form a helical membrane-spanning segment. The Cytoplasmic segment spans residues 60-71 (FSKTKSLQTPAN). Residues 72–98 (MFIINLAMSDLSFSAINGFPLKTISAF) traverse the membrane as a helical segment. The Extracellular portion of the chain corresponds to 99 to 110 (MKKWIFGKVACQ). Cysteines 109 and 187 form a disulfide. Residues 111-132 (LYGLLGGIFGFMSINTMAMISI) traverse the membrane as a helical segment. Positions 133–135 (DRY) match the 'Ionic lock' involved in activated form stabilization motif. Residues 133-152 (DRYNVIGRPMAASKKMSHRR) lie on the Cytoplasmic side of the membrane. Residues 153-173 (AFLMIIFVWMWSIVWSVGPVF) form a helical membrane-spanning segment. The Extracellular segment spans residues 174–200 (NWGAYVPEGILTSCSFDYLSTDPSTRS). The helical transmembrane segment at 201–225 (FILCMYFCGFMLPIIIIAFCYFNIV) threads the bilayer. Over 226 to 262 (MSVSNHEKEMAAMAKRLNAKELRKAQAGASAEMKLAK) the chain is Cytoplasmic. Residues 263 to 284 (ISMVIITQFMLSWSPYAIIALL) form a helical membrane-spanning segment. The Extracellular portion of the chain corresponds to 285–294 (AQFGPAEWVT). Residues 295 to 316 (PYAAELPVLFAKASAIHNPIVY) form a helical membrane-spanning segment. Residue Lys-306 is modified to N6-(retinylidene)lysine. Topologically, residues 317–455 (SVSHPKFREA…QGVDNQAYQA (139 aa)) are cytoplasmic. Residues Cys-337 and Cys-338 are each lipidated (S-palmitoyl cysteine). The segment covering 378–387 (QKMQAQQAAY) has biased composition (low complexity). A disordered region spans residues 378-455 (QKMQAQQAAY…QGVDNQAYQA (78 aa)). Residues 388-433 (QPPPPPQGYPPQGYPPQGAYPPPQGYPPQGYPPQGYPPQGYPPQGA) are compositionally biased toward pro residues. 6 consecutive repeat copies span residues 395–399 (GYPPQ), 400–404 (GYPPQ), 412–416 (GYPPQ), 417–421 (GYPPQ), 422–426 (GYPPQ), and 427–431 (GYPPQ). The interval 395–431 (GYPPQGYPPQGAYPPPQGYPPQGYPPQGYPPQGYPPQ) is 6 X 5 AA repeats of G-Y-P-P-Q.

It belongs to the G-protein coupled receptor 1 family. Opsin subfamily. Post-translationally, contains one covalently linked retinal chromophore. Upon light absorption, the covalently bound 11-cis-retinal is converted to all-trans-retinal. After hydrolysis of the Schiff base and release of the covalently bound all-trans-retinal, active rhodopsin is regenerated by binding of a fresh molecule of 11-cis-retinal.

It localises to the cell projection. It is found in the rhabdomere membrane. In terms of biological role, photoreceptor required for image-forming vision at low light intensity. Light-induced isomerization of 11-cis to all-trans retinal triggers a conformational change that activates signaling via G-proteins. Signaling mediates the activation of phospholipase C. Subsequent receptor phosphorylation mediates displacement of the bound G-protein alpha subunit by arrestin and terminates signaling. This Enteroctopus dofleini (North Pacific giant octopus) protein is Rhodopsin (RHO).